The primary structure comprises 312 residues: Retinol dehydrogenase 8 (312 aa).

Position 9-18 (9-18 (LISGCSSGIG)) interacts with NADP(+). Helical transmembrane passes span 87 to 107 (VLVN…SLAA), 138 to 158 (IVVV…VYAA), and 170 to 190 (LAVQ…GPVV). Ser143 is a binding site for substrate. Tyr156 (proton acceptor) is an active-site residue.

The protein belongs to the short-chain dehydrogenases/reductases (SDR) family. Detected in photoreceptor outer segments in the retina (at protein level).

It localises to the membrane. The enzyme catalyses all-trans-retinol + NADP(+) = all-trans-retinal + NADPH + H(+). Functionally, retinol dehydrogenase with a clear preference for NADP. Converts all-trans-retinal to all-trans-retinol. May play a role in the regeneration of visual pigment at high light intensity. The polypeptide is Retinol dehydrogenase 8 (RDH8) (Bos taurus (Bovine)).